A 579-amino-acid polypeptide reads, in one-letter code: Adenine/guanine permease AZG1 (579 aa).

12 helical membrane-spanning segments follow: residues 52–72 (AGTA…SILS), 131–151 (LIVA…LMAN), 183–203 (TALA…AIGF), 221–241 (AGIG…IGLV), 260–280 (ISLA…AGGS), 292–312 (MESP…YCLV), 320–340 (IYGI…VTAF), 379–399 (FWEA…GTLY), 414–434 (FAGQ…GSLL), 459–479 (AITV…LASI), 480–500 (PAWA…KSVT), and 514–534 (FVTM…IGGI).

It belongs to the nucleobase:cation symporter-2 (NCS2) (TC 2.A.40) family. Azg-like subfamily.

The protein resides in the membrane. Transports natural purines (adenine and guanine) as well as purine analogs. Confers sensitivity to 8-azaadenine and 8-azaguanine (8-azg). The protein is Adenine/guanine permease AZG1 (AZG1) of Arabidopsis thaliana (Mouse-ear cress).